Here is a 572-residue protein sequence, read N- to C-terminus: Transmembrane glycoprotein NMB (572 aa).

The first 22 residues, 1 to 22 (MECLYYFLGFLLLAARLPLDAA), serve as a signal peptide directing secretion. Topologically, residues 23–498 (KRFHDVLGNE…DPASPLRMAN (476 aa)) are extracellular. A Cell attachment site motif is present at residues 64–66 (RGD). N-linked (GlcNAc...) asparagine glycans are attached at residues N93, N134, N146, N200, N249, N275, N296, N300, N306, and N312. Residues 240 to 327 (VTMFQKNDRN…AAPGPCPPPP (88 aa)) form the PKD domain. The disordered stretch occupies residues 320-362 (PGPCPPPPPPPRPSKPTPSLATTLKSYDSNTPGPAGDNPLELS). Residues 321 to 335 (GPCPPPPPPPRPSKP) show a composition bias toward pro residues. Over residues 338–351 (SLATTLKSYDSNTP) the composition is skewed to polar residues. N-linked (GlcNAc...) asparagine glycosylation is found at N459 and N467. Residues 499–519 (SALISVGCLAIFVTVISLLVY) traverse the membrane as a helical segment. Topologically, residues 520 to 572 (KKHKEYNPIENSPGNVVRSKGLSVFLNRAKAVFFPGNQEKDPLLKNQEFKGVS) are cytoplasmic. S542 carries the phosphoserine modification.

It belongs to the PMEL/NMB family. Widely expressed, but very low expression, if any, in the brain. Expressed in the epidermis with higher levels in melanocytes compared with keratinocytes and Langerhans cells (at protein level). Expressed in peripheral blood, but not bone marrow mononuclear cells. Expressed in tissue macrophages, including liver Kuppfer cells and lung alveolar macrophages, in podocytes and in some cells of the ciliary body of the eye (at protein level). May be overexpressed in various cancers, including melanoma and glioblastoma multiforme.

Its subcellular location is the cell membrane. The protein resides in the melanosome membrane. The protein localises to the early endosome membrane. Functionally, could be a melanogenic enzyme. The protein is Transmembrane glycoprotein NMB (GPNMB) of Homo sapiens (Human).